Reading from the N-terminus, the 280-residue chain is Dermonecrotic toxin LsSicTox-alphaIA1 (280 aa).

His-12 is a catalytic residue. Residues Glu-32 and Asp-34 each coordinate Mg(2+). His-48 (nucleophile) is an active-site residue. Disulfide bonds link Cys-52/Cys-58 and Cys-54/Cys-197. Asp-92 contacts Mg(2+).

This sequence belongs to the arthropod phospholipase D family. Class II subfamily. Mg(2+) serves as cofactor. In terms of tissue distribution, expressed by the venom gland.

Its subcellular location is the secreted. The catalysed reaction is an N-(acyl)-sphingosylphosphocholine = an N-(acyl)-sphingosyl-1,3-cyclic phosphate + choline. The enzyme catalyses an N-(acyl)-sphingosylphosphoethanolamine = an N-(acyl)-sphingosyl-1,3-cyclic phosphate + ethanolamine. It catalyses the reaction a 1-acyl-sn-glycero-3-phosphocholine = a 1-acyl-sn-glycero-2,3-cyclic phosphate + choline. It carries out the reaction a 1-acyl-sn-glycero-3-phosphoethanolamine = a 1-acyl-sn-glycero-2,3-cyclic phosphate + ethanolamine. Its function is as follows. Dermonecrotic toxins cleave the phosphodiester linkage between the phosphate and headgroup of certain phospholipids (sphingolipid and lysolipid substrates), forming an alcohol (often choline) and a cyclic phosphate. This toxin acts on sphingomyelin (SM). It may also act on ceramide phosphoethanolamine (CPE), lysophosphatidylcholine (LPC) and lysophosphatidylethanolamine (LPE), but not on lysophosphatidylserine (LPS), and lysophosphatidylglycerol (LPG). It acts by transphosphatidylation, releasing exclusively cyclic phosphate products as second products. Induces dermonecrosis, hemolysis, increased vascular permeability, edema, inflammatory response, and platelet aggregation. The polypeptide is Dermonecrotic toxin LsSicTox-alphaIA1 (Loxosceles similis (Brazilian brown spider)).